The following is a 497-amino-acid chain: Probable D-lactate dehydrogenase, mitochondrial (497 aa).

The FAD-binding PCMH-type domain occupies 65 to 246 (HRCRPPDVVV…TKATLRLYGV (182 aa)).

The protein belongs to the FAD-binding oxidoreductase/transferase type 4 family. FAD is required as a cofactor.

It is found in the mitochondrion. It carries out the reaction (R)-lactate + 2 Fe(III)-[cytochrome c] = 2 Fe(II)-[cytochrome c] + pyruvate + 2 H(+). Functionally, involved in D-lactate, but not L-lactate catabolic process. The sequence is that of Probable D-lactate dehydrogenase, mitochondrial (ldhd) from Danio rerio (Zebrafish).